The primary structure comprises 238 residues: 4-hydroxy-tetrahydrodipicolinate reductase (238 aa).

12 to 17 (GASGRM) serves as a coordination point for NAD(+). An NADP(+)-binding site is contributed by arginine 40. NAD(+)-binding positions include 93-95 (GTT) and 117-120 (ASNF). The active-site Proton donor/acceptor is histidine 149. Histidine 150 contributes to the (S)-2,3,4,5-tetrahydrodipicolinate binding site. Catalysis depends on lysine 153, which acts as the Proton donor. 159 to 160 (GT) serves as a coordination point for (S)-2,3,4,5-tetrahydrodipicolinate.

It belongs to the DapB family.

The protein localises to the cytoplasm. It catalyses the reaction (S)-2,3,4,5-tetrahydrodipicolinate + NAD(+) + H2O = (2S,4S)-4-hydroxy-2,3,4,5-tetrahydrodipicolinate + NADH + H(+). The enzyme catalyses (S)-2,3,4,5-tetrahydrodipicolinate + NADP(+) + H2O = (2S,4S)-4-hydroxy-2,3,4,5-tetrahydrodipicolinate + NADPH + H(+). Its pathway is amino-acid biosynthesis; L-lysine biosynthesis via DAP pathway; (S)-tetrahydrodipicolinate from L-aspartate: step 4/4. In terms of biological role, catalyzes the conversion of 4-hydroxy-tetrahydrodipicolinate (HTPA) to tetrahydrodipicolinate. In Xanthomonas axonopodis pv. citri (strain 306), this protein is 4-hydroxy-tetrahydrodipicolinate reductase.